A 435-amino-acid polypeptide reads, in one-letter code: Serine/threonine-protein kinase 40 (435 aa).

Residues 1–10 (MKRRASDRGA) show a composition bias toward basic and acidic residues. The disordered stretch occupies residues 1-25 (MKRRASDRGAGETSARAKALGSGIS). One can recognise a Protein kinase domain in the interval 35–331 (FILGPRLGNS…ADVLEALSAI (297 aa)). Residues 41-49 (LGNSPVPSI) and K66 each bind ATP. R196 serves as the catalytic Proton acceptor.

Belongs to the protein kinase superfamily. CAMK Ser/Thr protein kinase family. In terms of tissue distribution, strongly expressed in heart, brain, placenta, lung, skeletal muscle, kidney, spleen, thymus, prostate, liver, pancreas, testis, ovary, small intestine, colon and peripheral blood leukocytes.

It localises to the nucleus. It is found in the cytoplasm. The catalysed reaction is L-seryl-[protein] + ATP = O-phospho-L-seryl-[protein] + ADP + H(+). It catalyses the reaction L-threonyl-[protein] + ATP = O-phospho-L-threonyl-[protein] + ADP + H(+). Its function is as follows. May be a negative regulator of NF-kappa-B and p53-mediated gene transcription. This is Serine/threonine-protein kinase 40 (STK40) from Homo sapiens (Human).